The following is a 67-amino-acid chain: MPKMKTKSSVKKRFKITATGKVMAGHGNKRHGLINRSQKMKRTNRGTMALPEQDGKTVKQWAPYGLD.

This sequence belongs to the bacterial ribosomal protein bL35 family.

This chain is Large ribosomal subunit protein bL35, found in Acidiphilium cryptum (strain JF-5).